The primary structure comprises 144 residues: Ribosome maturation factor RimP (144 aa).

It belongs to the RimP family.

It localises to the cytoplasm. Its function is as follows. Required for maturation of 30S ribosomal subunits. This chain is Ribosome maturation factor RimP, found in Methylobacillus flagellatus (strain ATCC 51484 / DSM 6875 / VKM B-1610 / KT).